The chain runs to 200 residues: Flavin prenyltransferase UbiX (200 aa).

Residues 15-17 (GAS), threonine 41, 102-105 (SMGT), and arginine 137 each bind FMN. Dimethylallyl phosphate contacts are provided by tyrosine 167 and lysine 183.

This sequence belongs to the UbiX/PAD1 family.

The catalysed reaction is dimethylallyl phosphate + FMNH2 = prenylated FMNH2 + phosphate. Flavin prenyltransferase that catalyzes the synthesis of the prenylated FMN cofactor (prenyl-FMN) for 4-hydroxy-3-polyprenylbenzoic acid decarboxylase UbiD. The prenyltransferase is metal-independent and links a dimethylallyl moiety from dimethylallyl monophosphate (DMAP) to the flavin N5 and C6 atoms of FMN. The chain is Flavin prenyltransferase UbiX from Alkalihalophilus pseudofirmus (strain ATCC BAA-2126 / JCM 17055 / OF4) (Bacillus pseudofirmus).